The following is a 231-amino-acid chain: Endonuclease NucS (231 aa).

Belongs to the NucS endonuclease family.

It is found in the cytoplasm. In terms of biological role, cleaves both 3' and 5' ssDNA extremities of branched DNA structures. The sequence is that of Endonuclease NucS from Pseudarthrobacter chlorophenolicus (strain ATCC 700700 / DSM 12829 / CIP 107037 / JCM 12360 / KCTC 9906 / NCIMB 13794 / A6) (Arthrobacter chlorophenolicus).